The sequence spans 131 residues: Sec-independent protein translocase protein TatB (131 aa).

The chain crosses the membrane as a helical span at residues leucine 2 to glycine 22. The tract at residues alanine 96–threonine 131 is disordered. The segment covering glutamine 107–proline 116 has biased composition (pro residues).

It belongs to the TatB family. The Tat system comprises two distinct complexes: a TatABC complex, containing multiple copies of TatA, TatB and TatC subunits, and a separate TatA complex, containing only TatA subunits. Substrates initially bind to the TatABC complex, which probably triggers association of the separate TatA complex to form the active translocon.

It is found in the cell membrane. Functionally, part of the twin-arginine translocation (Tat) system that transports large folded proteins containing a characteristic twin-arginine motif in their signal peptide across membranes. Together with TatC, TatB is part of a receptor directly interacting with Tat signal peptides. TatB may form an oligomeric binding site that transiently accommodates folded Tat precursor proteins before their translocation. This chain is Sec-independent protein translocase protein TatB, found in Mycolicibacterium paratuberculosis (strain ATCC BAA-968 / K-10) (Mycobacterium paratuberculosis).